Consider the following 460-residue polypeptide: Mitochondrial distribution and morphology protein 10 (460 aa).

The protein belongs to the MDM10 family. As to quaternary structure, component of the ER-mitochondria encounter structure (ERMES) or MDM complex, composed of MMM1, MDM10, MDM12 and MDM34. Associates with the mitochondrial outer membrane sorting assembly machinery SAM(core) complex.

It localises to the mitochondrion outer membrane. Component of the ERMES/MDM complex, which serves as a molecular tether to connect the endoplasmic reticulum and mitochondria. Components of this complex are involved in the control of mitochondrial shape and protein biogenesis and may function in phospholipid exchange. MDM10 is involved in the late assembly steps of the general translocase of the mitochondrial outer membrane (TOM complex). Functions in the TOM40-specific route of the assembly of outer membrane beta-barrel proteins, including the association of TOM40 with the receptor TOM22 and small TOM proteins. Can associate with the SAM(core) complex as well as the MDM12-MMM1 complex, both involved in late steps of the major beta-barrel assembly pathway, that is responsible for biogenesis of all outer membrane beta-barrel proteins. May act as a switch that shuttles between both complexes and channels precursor proteins into the TOM40-specific pathway. Plays a role in mitochondrial morphology and in the inheritance of mitochondria. This chain is Mitochondrial distribution and morphology protein 10, found in Candida glabrata (strain ATCC 2001 / BCRC 20586 / JCM 3761 / NBRC 0622 / NRRL Y-65 / CBS 138) (Yeast).